The primary structure comprises 486 residues: B-type cell cycle switch protein ccs52B (486 aa).

Residues 24 to 36 (RLETLSTPPSSAS) carry the PEST motif motif. Residues 27 to 36 (TLSTPPSSAS) show a composition bias toward polar residues. The tract at residues 27-57 (TLSTPPSSASPRAISNLSSTPSPSKSSKCSD) is disordered. The segment covering 41 to 53 (SNLSSTPSPSKSS) has biased composition (low complexity). The short motif at 57–63 (DRFIPCR) is the C-box element. The CSM motif signature appears at 87–98 (AYNRLLKSELFG). WD repeat units lie at residues 177–214 (QDDFYLNLVDWSSQNTLAVGLGTCVYLWSASNSKVTKL), 218–257 (GPYDGVCSVQWTKEGSFISIGTNGGQVQIWDGTKCKKVRT), 260–297 (GHQTRTGVLAWNSRILASGSRDRNILQHDMRVPSDFIG), 301–340 (GHKSEVCGLKWSCDDRELASGGNDNQLLVWNQHSQQPTLR), 343–385 (EHTA…QLNS), 387–428 (DTGS…KVAT), and 431–470 (GHSMRVLYLAMSPDGQTIVTGAGDETLRFWNVFPSMKTPA).

The protein belongs to the WD repeat CDC20/Fizzy family. In terms of tissue distribution, mostly expressed in shoot apices and, to a lower extent, in roots, especially in root tips, and in hypocotyls. Expressed in nodulation-competent root zone but not in the nodules.

It participates in protein modification; protein ubiquitination. Functionally, component of the anaphase promoting complex/cyclosome (APC/C), a cell cycle-regulated E3 ubiquitin-protein ligase complex that controls progression through mitosis and the G1 phase of the cell cycle. In Medicago truncatula (Barrel medic), this protein is B-type cell cycle switch protein ccs52B.